The sequence spans 134 residues: Ethylmalonyl-CoA/methylmalonyl-CoA epimerase (134 aa).

The 131-residue stretch at 4–134 (RLNHVAIAVP…NGCLVELEQV (131 aa)) folds into the VOC domain. Residues His7, His79, and Glu130 each contribute to the Co(2+) site. The active-site Proton donor/acceptor is the Glu130.

The protein belongs to the methylmalonyl-CoA epimerase family. Co(2+) serves as cofactor. Requires Mn(2+) as cofactor.

It catalyses the reaction (2R)-ethylmalonyl-CoA = (2S)-ethylmalonyl-CoA. The enzyme catalyses (R)-methylmalonyl-CoA = (S)-methylmalonyl-CoA. Promiscuous isomerase that catalyzes epimerization of both ethylmalonyl-CoA and methylmalonyl-CoA. Has thus a dual role in the ethylmalonyl-CoA pathway for acetyl-CoA assimilation required for R.sphaeroides growth on acetate as sole carbon source. The polypeptide is Ethylmalonyl-CoA/methylmalonyl-CoA epimerase (Cereibacter sphaeroides (strain ATCC 17023 / DSM 158 / JCM 6121 / CCUG 31486 / LMG 2827 / NBRC 12203 / NCIMB 8253 / ATH 2.4.1.) (Rhodobacter sphaeroides)).